The sequence spans 148 residues: Cytochrome c-type biogenesis protein CcmE (148 aa).

The Cytoplasmic portion of the chain corresponds to 1 to 7 (MKARNKR). Residues 8–28 (LMLVGGGIALLVAAAALVLSA) traverse the membrane as a helical; Signal-anchor for type II membrane protein segment. Residues 29 to 148 (FQQNLVFFHT…AHKTATTVQQ (120 aa)) lie on the Periplasmic side of the membrane. Residues His-123 and Tyr-127 each coordinate heme.

Belongs to the CcmE/CycJ family.

It localises to the cell inner membrane. Its function is as follows. Heme chaperone required for the biogenesis of c-type cytochromes. Transiently binds heme delivered by CcmC and transfers the heme to apo-cytochromes in a process facilitated by CcmF and CcmH. This Azoarcus sp. (strain BH72) protein is Cytochrome c-type biogenesis protein CcmE.